We begin with the raw amino-acid sequence, 142 residues long: Large ribosomal subunit protein uL13 (142 aa).

The protein belongs to the universal ribosomal protein uL13 family. In terms of assembly, part of the 50S ribosomal subunit.

Functionally, this protein is one of the early assembly proteins of the 50S ribosomal subunit, although it is not seen to bind rRNA by itself. It is important during the early stages of 50S assembly. The chain is Large ribosomal subunit protein uL13 from Haemophilus influenzae (strain 86-028NP).